The following is a 503-amino-acid chain: AMP phosphorylase (503 aa).

AMP is bound by residues G168, 194–199 (SRAITS), and T203. D256 functions as the Proton donor in the catalytic mechanism. AMP is bound by residues S264 and K288.

The protein belongs to the thymidine/pyrimidine-nucleoside phosphorylase family. Type 2 subfamily.

The catalysed reaction is AMP + phosphate = alpha-D-ribose 1,5-bisphosphate + adenine. It catalyses the reaction CMP + phosphate = cytosine + alpha-D-ribose 1,5-bisphosphate. The enzyme catalyses UMP + phosphate = alpha-D-ribose 1,5-bisphosphate + uracil. Catalyzes the conversion of AMP and phosphate to adenine and ribose 1,5-bisphosphate (R15P). Exhibits phosphorylase activity toward CMP and UMP in addition to AMP. Functions in an archaeal AMP degradation pathway, together with R15P isomerase and RubisCO. This chain is AMP phosphorylase, found in Methanocaldococcus jannaschii (strain ATCC 43067 / DSM 2661 / JAL-1 / JCM 10045 / NBRC 100440) (Methanococcus jannaschii).